A 300-amino-acid polypeptide reads, in one-letter code: Cyclic nucleotide synthase CdnE01 (300 aa).

Mg(2+) is bound by residues Asp-63, Asp-65, and Asp-137.

This sequence belongs to the CD-NTase family. E01 subfamily. It depends on Mg(2+) as a cofactor.

With respect to regulation, binds to and probably activated by a virus-derived, approximately 400 nucleotide RNA (called CBASS-activating bacteriophage RNA, cabRNA) that begins in the viral terminase subunit terS and extends into terL, as well as by a shorter RNA with part of the cabRNA sequence able to form a hairpin. RNA secondary and/or tertiary structure, as well as viral infection itself, are important for CdnE activation. Cyclic nucleotide synthase (second messenger synthase) of a CBASS antivirus system. CBASS (cyclic oligonucleotide-based antiphage signaling system) provides immunity against bacteriophage. The CD-NTase protein synthesizes cyclic nucleotides in response to infection; these serve as specific second messenger signals. The signals activate a diverse range of effectors, leading to bacterial cell death and thus abortive phage infection. A type I-B CBASS system. Its function is as follows. Protects S.aureus against phage infection. When the CBASS operon (cdnE and the following gene) is introduced in S.aureus strain RN4220 there is strong protection against lytic DNA phages 80alpha-vir and phi-NM1-gamma-6 but little to no protection against phages phi-NM4-gamma-4 or phi-12-gamma-3. The chain is Cyclic nucleotide synthase CdnE01 from Staphylococcus haemolyticus.